Here is a 744-residue protein sequence, read N- to C-terminus: Dolasta-1(15),8-diene synthase (744 aa).

The interval 1–344 (MASTMMNYQD…RRYNPAAPLP (344 aa)) is terpene cyclase. Mg(2+)-binding residues include Asp108 and Asp112. Substrate is bound by residues Asp108, Asp112, 198-201 (RHYD), 246-250 (SWDKE), and 336-337 (RY). The short motif at 108 to 112 (DDLTD) is the DDXXD element. Residues 345-744 (RREDIGKVNG…LHLITFQLKV (400 aa)) are prenyltransferase. The tract at residues 399–422 (YTTMTPAETSSDDKKKKAKASHET) is disordered. A compositionally biased stretch (basic and acidic residues) spans 409–422 (SDDKKKKAKASHET). Isopentenyl diphosphate-binding residues include Arg459 and His488. Mg(2+) contacts are provided by Asp495 and Asp499. Residues 495–499 (DDVQD) carry the DDXXD motif. Dimethylallyl diphosphate is bound at residue Arg504. Isopentenyl diphosphate is bound at residue Arg505. The dimethylallyl diphosphate site is built by Lys581, Thr582, and Gln617.

It in the N-terminal section; belongs to the terpene synthase family. The protein in the C-terminal section; belongs to the FPP/GGPP synthase family. In terms of assembly, hexamer. Requires Mg(2+) as cofactor.

It carries out the reaction isopentenyl diphosphate + (2E,6E)-farnesyl diphosphate = (2E,6E,10E)-geranylgeranyl diphosphate + diphosphate. It catalyses the reaction (2E,6E,10E)-geranylgeranyl diphosphate = (5R,12R,14S)-dolasta-1(15),8-diene + diphosphate. The enzyme catalyses (2E,6E,10E)-geranylgeranyl diphosphate = delta-araneosene + diphosphate. Bifunctional terpene synthase involved in the biosynthesis of the diterpenes delta-araneosene and dolasta-1(15),8-diene. The C-terminal prenyltransferase domain of CgDS catalyzes formation of the universal precursor of diterpene, geranylgeranyl diphosphate (GGPP), whereas the N-terminal terpene cyclase domain catalyzes the cyclization of GGPP to the intermediate delta-araneosene that is further converted to dolasta-1(15),8-diene in a second cyclization event. In some cases the cyclization stops at the delta-araneosene stage. The polypeptide is Dolasta-1(15),8-diene synthase (Colletotrichum gloeosporioides (Anthracnose fungus)).